The sequence spans 39 residues: MTSQARIPLWIVAVVVGLGVVTVVGLFFYGSYTGLGAPV.

A helical membrane pass occupies residues 7-27; that stretch reads IPLWIVAVVVGLGVVTVVGLF.

The protein belongs to the PsbJ family. As to quaternary structure, PSII is composed of 1 copy each of membrane proteins PsbA, PsbB, PsbC, PsbD, PsbE, PsbF, PsbH, PsbI, PsbJ, PsbK, PsbL, PsbM, PsbT, PsbX, PsbY, PsbZ, Psb30/Ycf12, peripheral proteins PsbO, CyanoQ (PsbQ), PsbU, PsbV and a large number of cofactors. It forms dimeric complexes.

It is found in the cellular thylakoid membrane. Its function is as follows. One of the components of the core complex of photosystem II (PSII). PSII is a light-driven water:plastoquinone oxidoreductase that uses light energy to abstract electrons from H(2)O, generating O(2) and a proton gradient subsequently used for ATP formation. It consists of a core antenna complex that captures photons, and an electron transfer chain that converts photonic excitation into a charge separation. The protein is Photosystem II reaction center protein J of Synechococcus sp. (strain JA-3-3Ab) (Cyanobacteria bacterium Yellowstone A-Prime).